A 250-amino-acid polypeptide reads, in one-letter code: Low affinity immunoglobulin gamma Fc region receptor III-A (250 aa).

A signal peptide spans 1 to 20 (MWRLLSPTALLLLVSAGTRA). The Extracellular portion of the chain corresponds to 21 to 207 (ADLSKAMVVL…TSTFLPHWYQ (187 aa)). Ig-like C2-type domains are found at residues 32 to 105 (PEWN…LEVH) and 120 to 189 (EGDT…VNIT). Cystine bridges form between Cys47–Cys89 and Cys128–Cys172. 4 N-linked (GlcNAc...) asparagine glycosylation sites follow: Asn63, Asn133, Asn180, and Asn187. The helical transmembrane segment at 208-228 (IAFFLVTALLFVVDTGLHVAV) threads the bilayer. Residues 229–250 (QRDLQSSVKEWKDGKVTWSHGP) are Cytoplasmic-facing.

As to quaternary structure, forms a heterooligomeric complex with ITAM-containing signaling subunits FCER1G. Interacts (via transmembrane domain) with signaling subunits; this interaction is a prerequisite for receptor complex expression on the cell surface and intracellular signal transduction. Binds the Fc region of antigen-complexed IgG.

It is found in the cell membrane. Functionally, receptor for the invariable Fc fragment of immunoglobulin gamma (IgG). Optimally activated upon binding of clustered antigen-IgG complexes displayed on cell surfaces, triggers lysis of antibody-coated cells, a process known as antibody-dependent cellular cytotoxicity (ADCC). Does not bind free monomeric IgG, thus avoiding inappropriate effector cell activation in the absence of antigenic trigger. Mediates IgG effector functions on natural killer (NK) cells. Binds antigen-IgG complexes generated upon infection and triggers NK cell-dependent cytokine production and degranulation to limit viral load and propagation. Fc-binding subunit that associates with FCER1G adapter to form functional signaling complexes. Following the engagement of antigen-IgG complexes, triggers phosphorylation of immunoreceptor tyrosine-based activation motif (ITAM)-containing adapter with subsequent activation of phosphatidylinositol 3-kinase signaling and sustained elevation of intracellular calcium that ultimately drive NK cell activation. Mediates enhanced ADCC in response to afucosylated IgGs. The sequence is that of Low affinity immunoglobulin gamma Fc region receptor III-A from Felis catus (Cat).